The chain runs to 240 residues: Eukaryotic translation initiation factor 3 subunit J (240 aa).

A disordered region spans residues 1–66 (MADDWESAAD…VPVKTKPSKA (66 aa)). A compositionally biased stretch (acidic residues) spans 27-45 (GEDDDDDVKESWEDEEEKK).

This sequence belongs to the eIF-3 subunit J family. Component of the eukaryotic translation initiation factor 3 (eIF-3) complex. The eIF-3 complex interacts with pix.

The protein resides in the cytoplasm. Functionally, component of the eukaryotic translation initiation factor 3 (eIF-3) complex, which is involved in protein synthesis of a specialized repertoire of mRNAs and, together with other initiation factors, stimulates binding of mRNA and methionyl-tRNAi to the 40S ribosome. The eIF-3 complex specifically targets and initiates translation of a subset of mRNAs involved in cell proliferation. This chain is Eukaryotic translation initiation factor 3 subunit J, found in Drosophila persimilis (Fruit fly).